A 482-amino-acid polypeptide reads, in one-letter code: NADH-quinone oxidoreductase subunit N (482 aa).

13 helical membrane-spanning segments follow: residues 10–30 (ALGP…LILY), 44–64 (VGAI…PLGA), 77–97 (GFAR…LLLA), 113–133 (ILIV…DLIG), 166–186 (FVLG…VYGF), 206–226 (LGLV…LAAV), 243–265 (VTAF…VFIG), 277–296 (IIVF…AIGQ), 302–322 (LMAY…AAGT), 328–348 (GVVV…AVIL), 374–394 (AFCL…AGFF), 397–417 (FYVF…IGVV), and 451–471 (IVLA…APLV).

This sequence belongs to the complex I subunit 2 family. As to quaternary structure, NDH-1 is composed of 14 different subunits. Subunits NuoA, H, J, K, L, M, N constitute the membrane sector of the complex.

The protein localises to the cell inner membrane. It carries out the reaction a quinone + NADH + 5 H(+)(in) = a quinol + NAD(+) + 4 H(+)(out). Functionally, NDH-1 shuttles electrons from NADH, via FMN and iron-sulfur (Fe-S) centers, to quinones in the respiratory chain. The immediate electron acceptor for the enzyme in this species is believed to be ubiquinone. Couples the redox reaction to proton translocation (for every two electrons transferred, four hydrogen ions are translocated across the cytoplasmic membrane), and thus conserves the redox energy in a proton gradient. The protein is NADH-quinone oxidoreductase subunit N of Methylobacterium nodulans (strain LMG 21967 / CNCM I-2342 / ORS 2060).